Reading from the N-terminus, the 314-residue chain is Bis(5'-nucleosyl)-tetraphosphatase, symmetrical (314 aa).

The disordered stretch occupies residues glutamine 267 to glycine 314. Low complexity predominate over residues glutamine 297–glycine 314.

Belongs to the Ap4A hydrolase family.

The enzyme catalyses P(1),P(4)-bis(5'-adenosyl) tetraphosphate + H2O = 2 ADP + 2 H(+). In terms of biological role, hydrolyzes diadenosine 5',5'''-P1,P4-tetraphosphate to yield ADP. This Xanthomonas axonopodis pv. citri (strain 306) protein is Bis(5'-nucleosyl)-tetraphosphatase, symmetrical.